The following is a 70-amino-acid chain: Large ribosomal subunit protein bL31 (70 aa).

Zn(2+)-binding residues include cysteine 16, cysteine 18, cysteine 37, and cysteine 40.

The protein belongs to the bacterial ribosomal protein bL31 family. Type A subfamily. In terms of assembly, part of the 50S ribosomal subunit. Zn(2+) is required as a cofactor.

Binds the 23S rRNA. This Psychromonas ingrahamii (strain DSM 17664 / CCUG 51855 / 37) protein is Large ribosomal subunit protein bL31.